The sequence spans 251 residues: L-ascorbate peroxidase 2, cytosolic (251 aa).

H43 functions as the Proton acceptor in the catalytic mechanism. Residues 113–137 (EVPFHPGRQDKPEPPPEGRLPDATQ) form a disordered region. The span at 119 to 132 (GRQDKPEPPPEGRL) shows a compositional bias: basic and acidic residues. A heme b-binding site is contributed by H164. K(+)-binding residues include T165, T181, N183, I186, and D188.

The protein belongs to the peroxidase family. Ascorbate peroxidase subfamily. It depends on heme b as a cofactor. Expressed in aerial vegetative parts and reproductive organs. Expressed in roots, leaves, stems and flowers. Expressed in young leaves, internodes, blade ears, stems and anthers.

The protein localises to the cytoplasm. It catalyses the reaction L-ascorbate + H2O2 = L-dehydroascorbate + 2 H2O. With respect to regulation, inhibited by p-chloromercuriphenylsulfonic acid (CMPSA). Plays a key role in hydrogen peroxide removal. Plays an important role in plant growth and development by protecting the seedlings from abiotic stresses through scavenging reactive oxygen species. Required for pollen viability. The sequence is that of L-ascorbate peroxidase 2, cytosolic from Oryza sativa subsp. japonica (Rice).